The sequence spans 233 residues: uncharacterized protein (233 aa).

This is an uncharacterized protein from Bacillus subtilis (strain 168).